The sequence spans 277 residues: Small ribosomal subunit protein uS5 (277 aa).

The tract at residues 18-40 (AAGRPSWSWQRPGERARTPGRKA) is disordered. The segment covering 29–40 (PGERARTPGRKA) has biased composition (basic and acidic residues). The region spanning 87–150 (LKDEVLKIMP…ILAKLSIIPV (64 aa)) is the S5 DRBM domain.

Belongs to the universal ribosomal protein uS5 family. Component of the small ribosomal subunit.

It localises to the cytoplasm. The protein resides in the nucleus. The protein localises to the nucleolus. In terms of biological role, component of the ribosome, a large ribonucleoprotein complex responsible for the synthesis of proteins in the cell. The small ribosomal subunit (SSU) binds messenger RNAs (mRNAs) and translates the encoded message by selecting cognate aminoacyl-transfer RNA (tRNA) molecules. The large subunit (LSU) contains the ribosomal catalytic site termed the peptidyl transferase center (PTC), which catalyzes the formation of peptide bonds, thereby polymerizing the amino acids delivered by tRNAs into a polypeptide chain. The nascent polypeptides leave the ribosome through a tunnel in the LSU and interact with protein factors that function in enzymatic processing, targeting, and the membrane insertion of nascent chains at the exit of the ribosomal tunnel. Plays a role in the assembly and function of the 40S ribosomal subunit. Mutations in this protein affects the control of translational fidelity. Involved in nucleolar processing of pre-18S ribosomal RNA and ribosome assembly. The protein is Small ribosomal subunit protein uS5 (rps2) of Ictalurus punctatus (Channel catfish).